A 298-amino-acid polypeptide reads, in one-letter code: tRNA U34 carboxymethyltransferase (298 aa).

Carboxy-S-adenosyl-L-methionine contacts are provided by residues K69, W83, K88, G107, 129–131 (DPS), 156–157 (VE), Y176, and R291.

The protein belongs to the class I-like SAM-binding methyltransferase superfamily. CmoB family. Homotetramer.

It carries out the reaction carboxy-S-adenosyl-L-methionine + 5-hydroxyuridine(34) in tRNA = 5-carboxymethoxyuridine(34) in tRNA + S-adenosyl-L-homocysteine + H(+). Its function is as follows. Catalyzes carboxymethyl transfer from carboxy-S-adenosyl-L-methionine (Cx-SAM) to 5-hydroxyuridine (ho5U) to form 5-carboxymethoxyuridine (cmo5U) at position 34 in tRNAs. The protein is tRNA U34 carboxymethyltransferase of Campylobacter curvus (strain 525.92).